The following is a 385-amino-acid chain: Calcium/calmodulin-dependent protein kinase type 1D (385 aa).

The Protein kinase domain maps to 23–279 (FEFKETLGTG…CEQAARHPWI (257 aa)). ATP-binding positions include 29 to 37 (LGTGAFSEV) and lysine 52. Residue lysine 113 forms a Glycyl lysine isopeptide (Lys-Gly) (interchain with G-Cter in SUMO2) linkage. Phosphoserine is present on serine 122. Catalysis depends on aspartate 144, which acts as the Proton acceptor. Threonine 180 carries the phosphothreonine; by CaMKK1 and CaMKK2 modification. Residues 279-319 (IAGDTALSKNIHESVSAQIRKNFAKSKWRQAFNATAVVRHM) form an autoinhibitory domain region. Residues 299-320 (KNFAKSKWRQAFNATAVVRHMR) are calmodulin-binding. The short motif at 318–324 (HMRRLQL) is the Nuclear export signal element. A disordered region spans residues 363 to 385 (VAGVGAERRPRPTTVTTGHTGSK). Residues 375 to 385 (TTVTTGHTGSK) show a composition bias toward polar residues.

It belongs to the protein kinase superfamily. CAMK Ser/Thr protein kinase family. CaMK subfamily. Expressed ubiquitously with high levels in brain and low levels in kidney. Isoform 2 is highly expressed in brain compared to other tissues. In hematopoietic cell lines predominant expression was detected in T and EC cells.

The protein resides in the cytoplasm. It localises to the nucleus. It carries out the reaction L-seryl-[protein] + ATP = O-phospho-L-seryl-[protein] + ADP + H(+). It catalyses the reaction L-threonyl-[protein] + ATP = O-phospho-L-threonyl-[protein] + ADP + H(+). With respect to regulation, activated by Ca(2+)/calmodulin. Binding of calmodulin results in conformational change that relieves intrasteric autoinhibition and allows phosphorylation of Thr-180 within the activation loop by CaMKK1 or CaMKK2. Phosphorylation of Thr-180 results in several fold increase in total activity. Unlike CaMK4, may be unable to exhibit autonomous activity after Ca(2+)/calmodulin activation. Its function is as follows. Calcium/calmodulin-dependent protein kinase that operates in the calcium-triggered CaMKK-CaMK1 signaling cascade and, upon calcium influx, activates CREB-dependent gene transcription, regulates calcium-mediated granulocyte function and respiratory burst and promotes basal dendritic growth of hippocampal neurons. In neutrophil cells, required for cytokine-induced proliferative responses and activation of the respiratory burst. Activates the transcription factor CREB1 in hippocampal neuron nuclei. May play a role in apoptosis of erythroleukemia cells. In vitro, phosphorylates transcription factor CREM isoform Beta. Isoform 1 but not isoform 2 activates CREB1. This is Calcium/calmodulin-dependent protein kinase type 1D (Camk1d) from Mus musculus (Mouse).